The primary structure comprises 335 residues: Transcriptional activator NphR (335 aa).

Residues 231–329 enclose the HTH araC/xylS-type domain; sequence TRVQRVIEQN…GSSPGLYRKE (99 aa). DNA-binding regions (H-T-H motif) lie at residues 249-270 and 296-319; these read SDIA…NAEG and VADV…RSTF.

Functionally, transcriptional activator of nphA1 and nphA2 involved in the degradation of 4-nitrophenol (4-NP). The chain is Transcriptional activator NphR (nphR) from Rhodococcus sp.